Here is a 582-residue protein sequence, read N- to C-terminus: ATP-dependent lipid A-core flippase (582 aa).

5 helical membrane-spanning segments follow: residues 15–35 (LWPI…ALVI), 68–88 (YVVV…SYCL), 140–160 (GALI…AVML), 161–181 (YTSW…AVLI), and 254–274 (VQII…VPTI). The ABC transmembrane type-1 domain maps to 27–310 (VVSGIALVIN…LTNVNAQFQK (284 aa)). The ABC transporter domain maps to 342–578 (LSFKNVTFTY…NGAYKQLHHI (237 aa)). 376 to 383 (GRSGSGKS) is an ATP binding site.

The protein belongs to the ABC transporter superfamily. Lipid exporter (TC 3.A.1.106) family. As to quaternary structure, homodimer.

The protein resides in the cell inner membrane. It catalyses the reaction ATP + H2O + lipid A-core oligosaccharideSide 1 = ADP + phosphate + lipid A-core oligosaccharideSide 2.. Its function is as follows. Involved in lipopolysaccharide (LPS) biosynthesis. Translocates lipid A-core from the inner to the outer leaflet of the inner membrane. Transmembrane domains (TMD) form a pore in the inner membrane and the ATP-binding domain (NBD) is responsible for energy generation. The chain is ATP-dependent lipid A-core flippase from Pasteurella multocida (strain Pm70).